A 437-amino-acid polypeptide reads, in one-letter code: Nuclear hormone receptor family member nhr-28 (437 aa).

Positions 5-80 (KSPCSVCGEA…VGMRKSAVQR (76 aa)) form a DNA-binding region, nuclear receptor. 2 consecutive NR C4-type zinc fingers follow at residues 8 to 28 (CSVC…CRAC) and 44 to 68 (CRAM…FTKC). The NR LBD domain occupies 115–376 (YEETGMPTLS…ETFYELVSGR (262 aa)).

This sequence belongs to the nuclear hormone receptor family. Expressed in the pharynx, intestine and hypodermis.

It localises to the nucleus. Functionally, orphan nuclear receptor. The polypeptide is Nuclear hormone receptor family member nhr-28 (nhr-28) (Caenorhabditis elegans).